A 215-amino-acid chain; its full sequence is Soluble inorganic pyrophosphatase (215 aa).

A compositionally biased stretch (low complexity) spans 1 to 21 (MSQEDSTSAAAAQQPTSRPAP). The segment at 1–24 (MSQEDSTSAAAAQQPTSRPAPKLN) is disordered. Mg(2+)-binding residues include D103, D108, and D140.

It belongs to the PPase family. The cofactor is Mg(2+). In terms of tissue distribution, expressed in metabolically active tissue such as root, shoot, embryo and aleurone.

The protein resides in the cytoplasm. It carries out the reaction diphosphate + H2O = 2 phosphate + H(+). In terms of biological role, may play a role in germination. This is Soluble inorganic pyrophosphatase (IPP) from Hordeum vulgare subsp. vulgare (Domesticated barley).